The chain runs to 520 residues: Alpha-1B adrenergic receptor (520 aa).

The Extracellular segment spans residues M1–A45. N-linked (GlcNAc...) asparagine glycosylation is found at N10, N24, N29, and N34. Residues I46 to V70 form a helical membrane-spanning segment. Residues A71–F83 are Cytoplasmic-facing. Residues I84–L105 traverse the membrane as a helical segment. At E106–R115 the chain is on the extracellular side. The chain crosses the membrane as a helical span at residues I116–I141. C118 and C195 are joined by a disulfide. Residues D142–K161 lie on the Cytoplasmic side of the membrane. The chain crosses the membrane as a helical span at residues A162–W184. Topologically, residues K185–P201 are extracellular. The chain crosses the membrane as a helical span at residues F202 to C224. Residues R225–T295 lie on the Cytoplasmic side of the membrane. T264 carries the post-translational modification Phosphothreonine. A helical membrane pass occupies residues L296–L319. The Extracellular portion of the chain corresponds to F320–P326. Residues D327–S351 traverse the membrane as a helical segment. At S352 to F520 the chain is on the cytoplasmic side. C365 carries the S-palmitoyl cysteine lipid modification. A Nuclear localization signal motif is present at residues R368 to R380. 2 disordered regions span residues G394–G432 and L479–F520.

Belongs to the G-protein coupled receptor 1 family. Adrenergic receptor subfamily. ADRA1B sub-subfamily. As to quaternary structure, homo- and heterooligomer. Heterooligomerizes with ADRA1B homooligomers in cardiac myocytes. Interacts with CAVIN4.

Its subcellular location is the nucleus membrane. It localises to the cell membrane. The protein resides in the cytoplasm. The protein localises to the membrane. It is found in the caveola. This alpha-adrenergic receptor mediates its action by association with G proteins that activate a phosphatidylinositol-calcium second messenger system. Its effect is mediated by G(q) and G(11) proteins. Nuclear ADRA1A-ADRA1B heterooligomers regulate phenylephrine (PE)-stimulated ERK signaling in cardiac myocytes. This chain is Alpha-1B adrenergic receptor (ADRA1B), found in Homo sapiens (Human).